We begin with the raw amino-acid sequence, 115 residues long: Toxin-like structure LSTX-D2 (115 aa).

A signal peptide spans Met1–Ala22. Residues Ile23–Arg44 constitute a propeptide that is removed on maturation. Disulfide bonds link Cys48-Cys63, Cys55-Cys72, Cys62-Cys87, and Cys74-Cys85.

It belongs to the neurotoxin 19 (CSTX) family. 01 subfamily. As to expression, expressed by the venom gland.

The protein localises to the secreted. The protein is Toxin-like structure LSTX-D2 of Lycosa singoriensis (Wolf spider).